A 687-amino-acid polypeptide reads, in one-letter code: Guanine-nucleotide exchange factor YEL1 (687 aa).

Residues 14-27 (YGVSQKGYNDNFSE) are compositionally biased toward polar residues. Disordered regions lie at residues 14 to 35 (YGVS…LHGS) and 63 to 97 (AAND…TDQN). Residues 57-264 (ILQNKEAAND…SEYYKTLNET (208 aa)) enclose the SEC7 domain. The span at 73–83 (TTDTATAGTGT) shows a compositional bias: low complexity. T290 bears the Phosphothreonine mark. S293 and S299 each carry phosphoserine. The 140-residue stretch at 412 to 551 (TSRRTSLSYL…DCINFWAGRI (140 aa)) folds into the PH domain.

This sequence belongs to the YEL1 family.

It localises to the cytoplasm. The protein resides in the cell membrane. The protein localises to the bud neck. It is found in the bud tip. Functionally, guanine nucleotide exchange factor for ARF3 required for localization of ARF3 to the bud neck and tip and involved in actin patch polarization. The protein is Guanine-nucleotide exchange factor YEL1 (YEL1) of Saccharomyces cerevisiae (strain YJM789) (Baker's yeast).